We begin with the raw amino-acid sequence, 188 residues long: Large ribosomal subunit protein uL6 (188 aa).

It belongs to the universal ribosomal protein uL6 family. Part of the 50S ribosomal subunit.

Functionally, this protein binds to the 23S rRNA, and is important in its secondary structure. It is located near the subunit interface in the base of the L7/L12 stalk, and near the tRNA binding site of the peptidyltransferase center. This chain is Large ribosomal subunit protein uL6, found in Myxococcus xanthus (strain DK1622).